The sequence spans 586 residues: Frizzled-10-A (586 aa).

The first 26 residues, 1–26, serve as a signal peptide directing secretion; sequence MDVSGVTGLLRGTALLLVLAAALCSA. Topologically, residues 27-230 are extracellular; the sequence is ISSINPDRSG…DVYWSKDDKK (204 aa). In terms of domain architecture, FZ spans 35-156; that stretch reads SGDGRCQAIE…NDPNYLCMEA (122 aa). Intrachain disulfides connect Cys40-Cys101, Cys48-Cys94, Cys85-Cys123, Cys112-Cys153, and Cys116-Cys140. An N-linked (GlcNAc...) asparagine glycan is attached at Asn54. An N-linked (GlcNAc...) asparagine glycan is attached at Asn159. The tract at residues 161–199 is disordered; the sequence is TDETPRGSSMLPPIFRPQRPSSGHEIYPKDPTSRSSCEN. Residues 231–251 form a helical membrane-spanning segment; that stretch reads FAFIWIAIWSILCFFSSAFTV. Topologically, residues 252–267 are cytoplasmic; the sequence is LTFLVDPLRFKYPERP. Residues 268–288 form a helical membrane-spanning segment; sequence IIFLSMCYCVYSVGYIIRLFA. Over 289–315 the chain is Extracellular; the sequence is GADSIACDRDSGQLYVIQEGLESTGCT. The chain crosses the membrane as a helical span at residues 316 to 336; sequence IVFLILYYFGMASSLWWVILT. Residues 337–356 lie on the Cytoplasmic side of the membrane; sequence LTWFLAAGKKWGHEAIEANS. Residues 357–377 form a helical membrane-spanning segment; that stretch reads SYFHLAAWAIPAVKTIMILVM. The Extracellular portion of the chain corresponds to 378-401; that stretch reads RRVAGDELTGVCYVGSMDVNALTG. The chain crosses the membrane as a helical span at residues 402 to 422; that stretch reads FVLIPLACYLIIGTSFILSGF. The Cytoplasmic segment spans residues 423–448; sequence VALFHIRRVMKTGGENTDKLEKLMVR. Residues 449-469 form a helical membrane-spanning segment; the sequence is IGVFSVLYTVPATCVIACYFY. The Extracellular portion of the chain corresponds to 470–507; it reads ERLNMDFWKILATQDKCKMDSQTKTLDCTMTSSIPAVE. The helical transmembrane segment at 508 to 528 threads the bilayer; the sequence is IFMVKIFMLLVVGITSGMWIW. Over 529–586 the chain is Cytoplasmic; that stretch reads TSKTVQSWQNVFSKRLKKRNRSKPASVITSAGIYKKPQHPPKVHHGKYESALQSPTCV. Positions 531–536 match the Lys-Thr-X-X-X-Trp motif, mediates interaction with the PDZ domain of Dvl family members motif; it reads KTVQSW. A disordered region spans residues 563–586; the sequence is KKPQHPPKVHHGKYESALQSPTCV. Over residues 564–573 the composition is skewed to basic residues; the sequence is KPQHPPKVHH. Positions 584–586 match the PDZ-binding motif; the sequence is TCV.

It belongs to the G-protein coupled receptor Fz/Smo family. In terms of tissue distribution, expressed in liver, lung, brain, testis, stomach, kidney, eye, skeletal muscle and skin.

The protein localises to the cell membrane. Receptor for Wnt proteins. Most of frizzled receptors are coupled to the beta-catenin canonical signaling pathway, which leads to the activation of disheveled proteins, inhibition of GSK-3 kinase, nuclear accumulation of beta-catenin and activation of Wnt target genes. A second signaling pathway involving PKC and calcium fluxes has been seen for some family members, but it is not yet clear if it represents a distinct pathway or if it can be integrated in the canonical pathway, as PKC seems to be required for Wnt-mediated inactivation of GSK-3 kinase. Both pathways seem to involve interactions with G-proteins. May be involved in transduction and intercellular transmission of polarity information during tissue morphogenesis and/or in differentiated tissues. Activated by Wnt8. Could have an antagonizing activity in the morphogenesis during development. This chain is Frizzled-10-A (fzd10-a), found in Xenopus laevis (African clawed frog).